The sequence spans 411 residues: O-glucosyltransferase rumi (411 aa).

Positions Met-1 to Ala-20 are cleaved as a signal peptide. 4 disulfides stabilise this stretch: Cys-64-Cys-75, Cys-73-Cys-378, Cys-120-Cys-126, and Cys-282-Cys-305. The Proton donor/acceptor role is filled by Asp-151. The segment at Ala-192–Pro-197 is interaction with the consensus sequence C-X-S-X-[PA]-C in peptide substrates. Residues Arg-229–Thr-233, Arg-237, Val-276–Phe-278, and Ala-294–Arg-298 contribute to the UDP-alpha-D-glucose site. The Prevents secretion from ER motif lies at Lys-408–Leu-411.

This sequence belongs to the glycosyltransferase 90 family.

The protein localises to the endoplasmic reticulum lumen. Its pathway is protein modification; protein glycosylation. In terms of biological role, protein O-glucosyltransferase. Catalyzes the reaction that attaches glucose through an O-glycosidic linkage to a conserved serine residue found in the consensus sequence C-X-S-X-[PA]-C in epidermal growth factor-like repeats. Regulates Notch signaling by glucosylating Notch in the ER, glucosylation is required for the correct folding and cleavage of Notch. This Drosophila melanogaster (Fruit fly) protein is O-glucosyltransferase rumi.